The sequence spans 858 residues: Leucine--tRNA ligase (858 aa).

The short motif at 42–52 (PYPSGRLHMGH) is the 'HIGH' region element. Residues 618–622 (KMSKS) carry the 'KMSKS' region motif. Lysine 621 provides a ligand contact to ATP.

Belongs to the class-I aminoacyl-tRNA synthetase family.

The protein localises to the cytoplasm. The enzyme catalyses tRNA(Leu) + L-leucine + ATP = L-leucyl-tRNA(Leu) + AMP + diphosphate. The sequence is that of Leucine--tRNA ligase from Aeromonas salmonicida (strain A449).